A 335-amino-acid chain; its full sequence is Cobalt-precorrin-5B C(1)-methyltransferase (335 aa).

It belongs to the CbiD family.

It carries out the reaction Co-precorrin-5B + S-adenosyl-L-methionine = Co-precorrin-6A + S-adenosyl-L-homocysteine. It functions in the pathway cofactor biosynthesis; adenosylcobalamin biosynthesis; cob(II)yrinate a,c-diamide from sirohydrochlorin (anaerobic route): step 6/10. Catalyzes the methylation of C-1 in cobalt-precorrin-5B to form cobalt-precorrin-6A. This Methanospirillum hungatei JF-1 (strain ATCC 27890 / DSM 864 / NBRC 100397 / JF-1) protein is Cobalt-precorrin-5B C(1)-methyltransferase.